We begin with the raw amino-acid sequence, 234 residues long: Sugar fermentation stimulation protein homolog (234 aa).

It belongs to the SfsA family.

The polypeptide is Sugar fermentation stimulation protein homolog (Shewanella frigidimarina (strain NCIMB 400)).